Here is a 471-residue protein sequence, read N- to C-terminus: Glutamate--tRNA ligase (471 aa).

Residues 9–19 (PSPTGYLHVGG) carry the 'HIGH' region motif. 4 residues coordinate Zn(2+): Cys98, Cys100, Cys125, and His127. The short motif at 237–241 (KLSKR) is the 'KMSKS' region element. Lys240 contributes to the ATP binding site.

This sequence belongs to the class-I aminoacyl-tRNA synthetase family. Glutamate--tRNA ligase type 1 subfamily. In terms of assembly, monomer. It depends on Zn(2+) as a cofactor.

The protein resides in the cytoplasm. It carries out the reaction tRNA(Glu) + L-glutamate + ATP = L-glutamyl-tRNA(Glu) + AMP + diphosphate. In terms of biological role, catalyzes the attachment of glutamate to tRNA(Glu) in a two-step reaction: glutamate is first activated by ATP to form Glu-AMP and then transferred to the acceptor end of tRNA(Glu). This chain is Glutamate--tRNA ligase, found in Shigella boydii serotype 18 (strain CDC 3083-94 / BS512).